The sequence spans 164 residues: Putative ankyrin repeat protein RBE_0585 (164 aa).

2 ANK repeats span residues 42-107 (NQDT…VAIL) and 126-149 (DKDT…MLDY).

The sequence is that of Putative ankyrin repeat protein RBE_0585 from Rickettsia bellii (strain RML369-C).